The primary structure comprises 199 residues: NADH-quinone oxidoreductase subunit C (199 aa).

This sequence belongs to the complex I 30 kDa subunit family. In terms of assembly, NDH-1 is composed of 14 different subunits. Subunits NuoB, C, D, E, F, and G constitute the peripheral sector of the complex.

It is found in the cell inner membrane. It carries out the reaction a quinone + NADH + 5 H(+)(in) = a quinol + NAD(+) + 4 H(+)(out). NDH-1 shuttles electrons from NADH, via FMN and iron-sulfur (Fe-S) centers, to quinones in the respiratory chain. The immediate electron acceptor for the enzyme in this species is believed to be ubiquinone. Couples the redox reaction to proton translocation (for every two electrons transferred, four hydrogen ions are translocated across the cytoplasmic membrane), and thus conserves the redox energy in a proton gradient. In Cupriavidus pinatubonensis (strain JMP 134 / LMG 1197) (Cupriavidus necator (strain JMP 134)), this protein is NADH-quinone oxidoreductase subunit C.